The primary structure comprises 725 residues: Methionine--tRNA ligase (725 aa).

The short motif at 27-37 is the 'HIGH' region element; sequence PYANGQIHIGH. Zn(2+) is bound by residues Cys158, Cys161, Cys171, and Cys174. Residues 348–352 carry the 'KMSKS' region motif; it reads KMSKS. Lys351 contributes to the ATP binding site. In terms of domain architecture, tRNA-binding spans 619 to 725; the sequence is DFAKIDLRIA…SGAKPGMRVK (107 aa).

Belongs to the class-I aminoacyl-tRNA synthetase family. MetG type 1 subfamily. As to quaternary structure, homodimer. Zn(2+) is required as a cofactor.

The protein localises to the cytoplasm. It carries out the reaction tRNA(Met) + L-methionine + ATP = L-methionyl-tRNA(Met) + AMP + diphosphate. Is required not only for elongation of protein synthesis but also for the initiation of all mRNA translation through initiator tRNA(fMet) aminoacylation. The polypeptide is Methionine--tRNA ligase (Burkholderia pseudomallei (strain 668)).